Consider the following 501-residue polypeptide: Aldehyde dehydrogenase, cytosolic 1 (501 aa).

Serine 2 bears the N-acetylserine mark. Lysine 91 and lysine 128 each carry N6-acetyllysine. Position 246-251 (246-251 (GSTEVG)) interacts with NAD(+). An N6-acetyllysine modification is found at lysine 252. The active-site Proton acceptor is glutamate 269. Cysteine 303 (nucleophile) is an active-site residue. N6-acetyllysine occurs at positions 353, 367, and 410. Serine 413 carries the phosphoserine modification. An N6-acetyllysine mark is found at lysine 419 and lysine 435.

It belongs to the aldehyde dehydrogenase family. As to quaternary structure, homotetramer. Highest level in liver, high level in lung, low level in kidney and testis.

It is found in the cytoplasm. It carries out the reaction an aldehyde + NAD(+) + H2O = a carboxylate + NADH + 2 H(+). It functions in the pathway alcohol metabolism; ethanol degradation; acetate from ethanol: step 2/2. Its function is as follows. Can oxidize benzaldehyde, propionaldehyde and acetaldehyde. No detectable activity with retinal. In Mus musculus (Mouse), this protein is Aldehyde dehydrogenase, cytosolic 1.